The chain runs to 422 residues: Enolase (422 aa).

Glutamine 163 is a binding site for (2R)-2-phosphoglycerate. Glutamate 205 acts as the Proton donor in catalysis. Mg(2+)-binding residues include aspartate 242, glutamate 283, and aspartate 310. Residues lysine 335, arginine 364, serine 365, and lysine 386 each contribute to the (2R)-2-phosphoglycerate site. Residue lysine 335 is the Proton acceptor of the active site.

Belongs to the enolase family. Mg(2+) serves as cofactor.

Its subcellular location is the cytoplasm. The protein resides in the secreted. It localises to the cell surface. The catalysed reaction is (2R)-2-phosphoglycerate = phosphoenolpyruvate + H2O. It functions in the pathway carbohydrate degradation; glycolysis; pyruvate from D-glyceraldehyde 3-phosphate: step 4/5. Catalyzes the reversible conversion of 2-phosphoglycerate (2-PG) into phosphoenolpyruvate (PEP). It is essential for the degradation of carbohydrates via glycolysis. The polypeptide is Enolase (Bdellovibrio bacteriovorus (strain ATCC 15356 / DSM 50701 / NCIMB 9529 / HD100)).